A 226-amino-acid polypeptide reads, in one-letter code: Orotidine 5'-phosphate decarboxylase (226 aa).

Substrate is bound by residues aspartate 8, lysine 30, aspartate 58–threonine 67, threonine 117, arginine 177, glutamine 186, glycine 206, and arginine 207. Lysine 60 (proton donor) is an active-site residue.

The protein belongs to the OMP decarboxylase family. Type 1 subfamily. Homodimer.

It carries out the reaction orotidine 5'-phosphate + H(+) = UMP + CO2. Its pathway is pyrimidine metabolism; UMP biosynthesis via de novo pathway; UMP from orotate: step 2/2. Catalyzes the decarboxylation of orotidine 5'-monophosphate (OMP) to uridine 5'-monophosphate (UMP). The chain is Orotidine 5'-phosphate decarboxylase from Campylobacter jejuni subsp. jejuni serotype O:6 (strain 81116 / NCTC 11828).